A 235-amino-acid polypeptide reads, in one-letter code: Auracyanin-B (235 aa).

Residues 1–21 (MSWRGSGRSNFRSRSSSNGGS) are compositionally biased toward low complexity. Disordered stretches follow at residues 1 to 27 (MSWR…SGGS) and 64 to 107 (ATPR…NVVN). A signal peptide spans 1–56 (MSWRGSGRSNFRSRSSSNGGSTFSGGSAGGPPLIVMMGLAFGAGLIMLIVMIASNA). Residues 57–80 (TAGGFVAATPRPTATPRPTAAPAP) constitute a propeptide that is removed on maturation. The span at 69 to 86 (TATPRPTAAPAPTQPPAA) shows a compositional bias: pro residues. Residues 87-100 (QPTTAPATQAANAP) show a composition bias toward low complexity. Positions 111–235 (AQTVEVRAAP…GMKGTLTVTP (125 aa)) constitute a Plastocyanin-like domain. Histidine 152, cysteine 217, histidine 222, and methionine 227 together coordinate Cu cation.

This sequence belongs to the multicopper oxidase family. Cu cation is required as a cofactor. Post-translationally, glycosylated.

It is found in the cell membrane. Functionally, probably a soluble electron acceptor for the integral membrane protein electron transfer alternative complex III (ACIII). The polypeptide is Auracyanin-B (Chloroflexus aurantiacus (strain ATCC 29366 / DSM 635 / J-10-fl)).